A 332-amino-acid polypeptide reads, in one-letter code: MLHASFSNAQLTPTFYDNSCPNVSNIVRDIIINELRSDPSIAASILRLHFHDCFVNGCDASILLDNTTSFRTEKDAFGNANSARGFPVVDRIKAAVERACPRTVSCADVLTIAAQQSVNLAGGPSWRVPLGRRDSRQAFLDLANANLPAPSFTLPELKAAFANVGLNRPSDLVALSGGHTFGKNQCRFIMDRLYNFSNTGLPDPTLNTTYLQTLRQQCPRNGNQSVLVDFDLRTPTVFDNKYYVNLKEQKGLIQSDQELFSSPNATDTIPLVRSYADGTQTFFNAFVEAMNRMGNITPLTGTQGEIRLNCRVVNSNSLLHDIVEVVDFVSSM.

An N-terminal signal peptide occupies residues 1-9 (MLHASFSNA). Q10 is subject to Pyrrolidone carboxylic acid. 4 cysteine pairs are disulfide-bonded: C20–C100, C53–C58, C106–C310, and C186–C218. N-linked (GlcNAc...) asparagine glycosylation occurs at N22. Residue H51 is the Proton acceptor of the active site. 5 residues coordinate Ca(2+): D52, V55, G57, D59, and S61. N66 is a glycosylation site (N-linked (GlcNAc...) asparagine). P148 is a binding site for substrate. H179 is a heme b binding site. Ca(2+) is bound at residue T180. N-linked (GlcNAc...) asparagine glycosylation is found at N195, N207, and N223. Residues D231, T234, and D239 each contribute to the Ca(2+) site. N-linked (GlcNAc...) asparagine glycosylation is present at N264.

Belongs to the peroxidase family. Classical plant (class III) peroxidase subfamily. Ca(2+) serves as cofactor. Requires heme b as cofactor.

It localises to the secreted. The protein localises to the vacuole. It carries out the reaction 2 a phenolic donor + H2O2 = 2 a phenolic radical donor + 2 H2O. Functionally, removal of H(2)O(2), oxidation of toxic reductants, biosynthesis and degradation of lignin, suberization, auxin catabolism, response to environmental stresses such as wounding, pathogen attack and oxidative stress. These functions might be dependent on each isozyme/isoform in each plant tissue. This chain is Peroxidase C1C (PRXC1C), found in Armoracia rusticana (Horseradish).